A 145-amino-acid polypeptide reads, in one-letter code: NADH-quinone oxidoreductase subunit A (145 aa).

3 helical membrane passes run 14-34 (FAVFLLSALGLCVFMLTGGFL), 66-86 (FYLVAMFFVIFDVETLYLYAW), and 96-116 (VGFIEATIFILILLAGLVYLV).

This sequence belongs to the complex I subunit 3 family. NDH-1 is composed of 13 different subunits. Subunits NuoA, H, J, K, L, M, N constitute the membrane sector of the complex.

The protein resides in the cell inner membrane. The enzyme catalyses a quinone + NADH + 5 H(+)(in) = a quinol + NAD(+) + 4 H(+)(out). Functionally, NDH-1 shuttles electrons from NADH, via FMN and iron-sulfur (Fe-S) centers, to quinones in the respiratory chain. The immediate electron acceptor for the enzyme in this species is believed to be ubiquinone. Couples the redox reaction to proton translocation (for every two electrons transferred, four hydrogen ions are translocated across the cytoplasmic membrane), and thus conserves the redox energy in a proton gradient. The polypeptide is NADH-quinone oxidoreductase subunit A (Sodalis glossinidius (strain morsitans)).